Here is a 292-residue protein sequence, read N- to C-terminus: UDP-N-acetylenolpyruvoylglucosamine reductase (292 aa).

The 166-residue stretch at Gln-21 to Asp-186 folds into the FAD-binding PCMH-type domain. Residue Arg-165 is part of the active site. Ser-215 acts as the Proton donor in catalysis. The active site involves Glu-285.

The protein belongs to the MurB family. FAD is required as a cofactor.

Its subcellular location is the cytoplasm. The catalysed reaction is UDP-N-acetyl-alpha-D-muramate + NADP(+) = UDP-N-acetyl-3-O-(1-carboxyvinyl)-alpha-D-glucosamine + NADPH + H(+). The protein operates within cell wall biogenesis; peptidoglycan biosynthesis. Its function is as follows. Cell wall formation. The chain is UDP-N-acetylenolpyruvoylglucosamine reductase from Leuconostoc mesenteroides subsp. mesenteroides (strain ATCC 8293 / DSM 20343 / BCRC 11652 / CCM 1803 / JCM 6124 / NCDO 523 / NBRC 100496 / NCIMB 8023 / NCTC 12954 / NRRL B-1118 / 37Y).